We begin with the raw amino-acid sequence, 389 residues long: Transmembrane protease serine 11A (389 aa).

The Cytoplasmic segment spans residues 1–23 (MEVAGYGTHNRDLKQWMVTLLSA). Residues 24-44 (LSLMMVVVTIGLLALFLVFDI) form a helical; Signal-anchor for type II membrane protein membrane-spanning segment. One can recognise an SEA domain in the interval 31–148 (VTIGLLALFL…SLVQVKDCGK (118 aa)). Residues 45–389 (QVNSNSGQKS…RHWIASKTGL (345 aa)) are Extracellular-facing. In terms of domain architecture, Peptidase S1 spans 158–388 (IVSGNPAAKG…YRHWIASKTG (231 aa)). The cysteines at positions 183 and 199 are disulfide-linked. Catalysis depends on charge relay system residues His198 and Asp243. An N-linked (GlcNAc...) asparagine glycan is attached at Asn274. Cystine bridges form between Cys308/Cys324 and Cys335/Cys364. The Charge relay system role is filled by Ser339.

It belongs to the peptidase S1 family.

The protein localises to the membrane. Probable serine protease which may play a role in cellular senescence. Overexpression inhibits cell growth and induce G1 cell cycle arrest. This Mus musculus (Mouse) protein is Transmembrane protease serine 11A (Tmprss11a).